A 358-amino-acid polypeptide reads, in one-letter code: 4-hydroxy-2-oxovalerate aldolase 2 (358 aa).

Positions 16–268 (VLLHDMCLRD…ETGVDLFKLM (253 aa)) constitute a Pyruvate carboxyltransferase domain. 24–25 (RD) serves as a coordination point for substrate. Aspartate 25 is a Mn(2+) binding site. The active-site Proton acceptor is histidine 28. Substrate is bound by residues serine 178 and histidine 207. The Mn(2+) site is built by histidine 207 and histidine 209. Residue tyrosine 298 coordinates substrate.

Belongs to the 4-hydroxy-2-oxovalerate aldolase family.

It carries out the reaction (S)-4-hydroxy-2-oxopentanoate = acetaldehyde + pyruvate. In Methylibium petroleiphilum (strain ATCC BAA-1232 / LMG 22953 / PM1), this protein is 4-hydroxy-2-oxovalerate aldolase 2.